The primary structure comprises 353 residues: Inactive ADP-ribosyltransferase ARH2 (353 aa).

Ser27 is subject to Phosphoserine.

The protein belongs to the ADP-ribosylglycohydrolase family. Expressed in the embryonic heart at E11.5.

It is found in the cytoplasm. Its subcellular location is the myofibril. It localises to the sarcomere. Functionally, required for myofibril assembly and outgrowth of the cardiac chambers in the developing heart. Appears to be catalytically inactive, showing no activity against O-acetyl-ADP-ribose. The sequence is that of Inactive ADP-ribosyltransferase ARH2 (Adprhl1) from Mus musculus (Mouse).